The sequence spans 475 residues: Ankyrin repeat, SAM and basic leucine zipper domain-containing protein 1 (475 aa).

The disordered stretch occupies residues 1–24 (MAAGTVRGLAVAGGGESSESEDDG). Phosphoserine is present on residues Ser17, Ser18, and Ser20. ANK repeat units lie at residues 45 to 74 (EKNE…SVDS), 78 to 107 (YGWT…NASF), 110 to 144 (DKQT…DPNV), 148 to 177 (RLMT…EVNA), 181 to 210 (NGYT…NKML), and 214 to 243 (DGKT…PLEG). The SAM domain occupies 272-334 (SYTAFGDLEI…KILAALKELE (63 aa)).

Interacts with DDX4, PIWIL1, RANBP9 and TDRD1.

The protein resides in the cytoplasm. Functionally, plays a central role during spermatogenesis by repressing transposable elements and preventing their mobilization, which is essential for the germline integrity. Acts via the piRNA metabolic process, which mediates the repression of transposable elements during meiosis by forming complexes composed of piRNAs and Piwi proteins and governs the methylation and subsequent repression of transposons. Its association with pi-bodies suggests a participation in the primary piRNAs metabolic process. Required prior to the pachytene stage to facilitate the production of multiple types of piRNAs, including those associated with repeats involved in the regulation of retrotransposons. May act by mediating protein-protein interactions during germ cell maturation. The protein is Ankyrin repeat, SAM and basic leucine zipper domain-containing protein 1 (ASZ1) of Neofelis nebulosa (Clouded leopard).